We begin with the raw amino-acid sequence, 207 residues long: GTP cyclohydrolase 1 (207 aa).

Positions 94, 97, and 167 each coordinate Zn(2+).

The protein belongs to the GTP cyclohydrolase I family. In terms of assembly, toroid-shaped homodecamer, composed of two pentamers of five dimers.

The catalysed reaction is GTP + H2O = 7,8-dihydroneopterin 3'-triphosphate + formate + H(+). Its pathway is cofactor biosynthesis; 7,8-dihydroneopterin triphosphate biosynthesis; 7,8-dihydroneopterin triphosphate from GTP: step 1/1. The chain is GTP cyclohydrolase 1 from Thermobifida fusca (strain YX).